A 124-amino-acid polypeptide reads, in one-letter code: Large ribosomal subunit protein eL22 (124 aa).

The protein belongs to the eukaryotic ribosomal protein eL22 family. Component of the large ribosomal subunit. Mature ribosomes consist of a small (40S) and a large (60S) subunit. The 40S subunit contains about 32 different proteins and 1 molecule of RNA (18S). The 60S subunit contains 45 different proteins and 3 molecules of RNA (25S, 5.8S and 5S).

Its subcellular location is the cytoplasm. Its function is as follows. Component of the ribosome, a large ribonucleoprotein complex responsible for the synthesis of proteins in the cell. The small ribosomal subunit (SSU) binds messenger RNAs (mRNAs) and translates the encoded message by selecting cognate aminoacyl-transfer RNA (tRNA) molecules. The large subunit (LSU) contains the ribosomal catalytic site termed the peptidyl transferase center (PTC), which catalyzes the formation of peptide bonds, thereby polymerizing the amino acids delivered by tRNAs into a polypeptide chain. The nascent polypeptides leave the ribosome through a tunnel in the LSU and interact with protein factors that function in enzymatic processing, targeting, and the membrane insertion of nascent chains at the exit of the ribosomal tunnel. This Candida albicans (strain SC5314 / ATCC MYA-2876) (Yeast) protein is Large ribosomal subunit protein eL22.